The primary structure comprises 598 residues: Aspartate--tRNA(Asp/Asn) ligase (598 aa).

L-aspartate is bound at residue Glu-175. Positions 199–202 are aspartate; sequence QQFK. The L-aspartate site is built by Arg-221 and His-452. Residue 221 to 223 participates in ATP binding; sequence RDE. Glu-486 is an ATP binding site. L-aspartate is bound at residue Arg-493. An ATP-binding site is contributed by 538–541; it reads GVDR.

It belongs to the class-II aminoacyl-tRNA synthetase family. Type 1 subfamily. In terms of assembly, homodimer.

It localises to the cytoplasm. The catalysed reaction is tRNA(Asx) + L-aspartate + ATP = L-aspartyl-tRNA(Asx) + AMP + diphosphate. Functionally, aspartyl-tRNA synthetase with relaxed tRNA specificity since it is able to aspartylate not only its cognate tRNA(Asp) but also tRNA(Asn). Reaction proceeds in two steps: L-aspartate is first activated by ATP to form Asp-AMP and then transferred to the acceptor end of tRNA(Asp/Asn). This chain is Aspartate--tRNA(Asp/Asn) ligase, found in Gluconobacter oxydans (strain 621H) (Gluconobacter suboxydans).